A 217-amino-acid chain; its full sequence is MVKVFLVDDHEVVRRGLVDLLGADPELDVVGEAGSVAEAMARVPAARPDVAVLDVRLPDGNGIELCRDLLSRMPDLRCLILTSYTSDEAMLDAILAGASGYVVKDIKGMELARAVKDVGAGRSLLDNRAAAALMAKLRGAAEKQDPLSGLTDQERTLLGLLSEGLTNKQIADRMFLAEKTVKNYVSRLLAKLGMERRTQAAVFATELKRSRPPGDGP.

Residues 3–119 (KVFLVDDHEV…ELARAVKDVG (117 aa)) enclose the Response regulatory domain. 4-aspartylphosphate is present on aspartate 54. The 66-residue stretch at 143–208 (KQDPLSGLTD…QAAVFATELK (66 aa)) folds into the HTH luxR-type domain. A DNA-binding region (H-T-H motif) is located at residues 167-186 (NKQIADRMFLAEKTVKNYVS). 2 positions are modified to phosphothreonine; by PknH: threonine 198 and threonine 205.

In terms of assembly, homodimer. Interacts with NarL. In terms of processing, phosphorylated on Asp-54 by both DevS (DosS) and DosT. Phosphorylated on Thr-198 and Thr-205 by PknH, which enhances DevR dimerization. Aspartate phosphorylation and threonine phosphorylation cooperatively enhance DevR binding to DNA.

The protein resides in the cytoplasm. It localises to the host cytoplasmic vesicle. The protein localises to the host phagosome. In terms of biological role, member of the two-component regulatory system DevR/DevS (also called DosR/DosS) involved in onset of the dormancy response. Regulates an approximately 48-member regulon. When phosphorylated binds and activates the promoter of DevR regulon genes in response to hypoxia. The presence of target DNA increases stability of phospho-DevR in vitro. Activates its own transcription under hypoxic but not aerobic conditions, probably binds as a dimer to tandem binding sites within the devR and hspX promoters. Accepts a phosphate group from DevS (DosS) and from DosT. Does not regulate transcription of dosT. The polypeptide is DNA-binding transcriptional activator DevR/DosR (Mycobacterium tuberculosis (strain ATCC 25618 / H37Rv)).